The chain runs to 950 residues: Protocadherin alpha-9 (950 aa).

An N-terminal signal peptide occupies residues 1–29 (MLYSSRGDPEGQPLLLSLLILAMWVVGSG). Cadherin domains are found at residues 30–133 (QLHY…PPVF), 134–242 (PATQ…APVF), 243–350 (DRTL…APQL), 351–455 (TIKT…APAF), 456–565 (AQPE…APAL), and 588–678 (GVVV…APKS). At 30–697 (QLHYSVPEEA…GPEVTLVDVN (668 aa)) the chain is on the extracellular side. 2 N-linked (GlcNAc...) asparagine glycosylation sites follow: Asn-254 and Asn-265. N-linked (GlcNAc...) asparagine glycosylation is present at Asn-548. A helical transmembrane segment spans residues 698 to 718 (VYLIIAICAVSSLLVLTLLLY). At 719 to 950 (TVLRCSAMPT…GNSTTDNSDQ (232 aa)) the chain is on the cytoplasmic side. One copy of the PXXP 1 repeat lies at 734–737 (PGKP). Positions 734–894 (PGKPTLVCSS…PDKFIIPGSP (161 aa)) are 5 X 4 AA repeats of P-X-X-P. 2 disordered regions span residues 759-808 (CSGE…DWRY) and 827-950 (ILRA…NSDQ). The segment covering 789–798 (PSASSDSSGK) has biased composition (polar residues). PXXP repeat units follow at residues 799 to 802 (PRQP), 832 to 835 (PGGP), 873 to 876 (PGNP), and 891 to 894 (PGSP). The span at 909 to 923 (DKSDFITFGKKEETK) shows a compositional bias: basic and acidic residues.

The protein resides in the cell membrane. Its function is as follows. Potential calcium-dependent cell-adhesion protein. May be involved in the establishment and maintenance of specific neuronal connections in the brain. The polypeptide is Protocadherin alpha-9 (PCDHA9) (Pan troglodytes (Chimpanzee)).